The following is a 412-amino-acid chain: MYSFEDIKVFDPELADSITMEIARQNDHIELIASENFVSKAVMAAMGSPLTNKYAEGYPGKRYYGGCEFVDIAENLAIERAKKLFGCTYANVQPHSGAQANMAVFFALLQPGDTVMGMNLAHGGHLTHGSPVNFSGSYFNIVPYGVDDNGFIDYEEVEKIAKECKPKLIVAGASAYARKIDFKRFREIADLVGAYLMVDMAHIAGLVAAGYHQSPIPYAHVTTTTTHKTLRGPRGGMILSSEEFAEEHKLNKSIFPGTQGGPLMHVIAAKAICFKEALDDSFKDYAGKIISNAGALANELTARGFNLVSGGTDNHLMLIDLQNMNITGKEAEHILDEANITCNKNTVPNDPASPFVTSGIRLGTPAITTRGFNEKDMAVVAEAISLVVKDVDKNKEQAKALVKMLTDAYPLY.

(6S)-5,6,7,8-tetrahydrofolate contacts are provided by residues Leu120 and 124–126 (GHL). Residue Lys228 is modified to N6-(pyridoxal phosphate)lysine. 353–355 (SPF) serves as a coordination point for (6S)-5,6,7,8-tetrahydrofolate.

Belongs to the SHMT family. In terms of assembly, homodimer. Pyridoxal 5'-phosphate is required as a cofactor.

The protein resides in the cytoplasm. The catalysed reaction is (6R)-5,10-methylene-5,6,7,8-tetrahydrofolate + glycine + H2O = (6S)-5,6,7,8-tetrahydrofolate + L-serine. It participates in one-carbon metabolism; tetrahydrofolate interconversion. The protein operates within amino-acid biosynthesis; glycine biosynthesis; glycine from L-serine: step 1/1. In terms of biological role, catalyzes the reversible interconversion of serine and glycine with tetrahydrofolate (THF) serving as the one-carbon carrier. This reaction serves as the major source of one-carbon groups required for the biosynthesis of purines, thymidylate, methionine, and other important biomolecules. Also exhibits THF-independent aldolase activity toward beta-hydroxyamino acids, producing glycine and aldehydes, via a retro-aldol mechanism. This is Serine hydroxymethyltransferase from Lachnoclostridium phytofermentans (strain ATCC 700394 / DSM 18823 / ISDg) (Clostridium phytofermentans).